Consider the following 485-residue polypeptide: Acyl transferase 1 (485 aa).

Residue histidine 172 is the Proton acceptor of the active site.

Belongs to the plant acyltransferase family. In terms of tissue distribution, highly expressed in young panicles. Expressed in leaf sheaths and panicles.

Its function is as follows. Involved in defense against pathogens. May contribute to disease resistance by potentiating disease resistance signaling, or producing phytoalexin-like secondary products. The sequence is that of Acyl transferase 1 from Oryza sativa subsp. japonica (Rice).